The primary structure comprises 1436 residues: tRNA (guanosine(18)-2'-O)-methyltransferase (1436 aa).

Residues 1365–1367, G1389, and 1409–1418 contribute to the S-adenosyl-L-methionine site; these read LEQ and IQQFGVIRSM.

This sequence belongs to the class IV-like SAM-binding methyltransferase superfamily. RNA methyltransferase TrmH family.

It is found in the cytoplasm. The enzyme catalyses guanosine(18) in tRNA + S-adenosyl-L-methionine = 2'-O-methylguanosine(18) in tRNA + S-adenosyl-L-homocysteine + H(+). In terms of biological role, S-adenosyl-L-methionine-dependent 2'-O-ribose methyltransferase that catalyzes the formation of 2'-O-methylguanosine at position 18 (Gm18) in various tRNAs. The chain is tRNA (guanosine(18)-2'-O)-methyltransferase from Saccharomyces cerevisiae (strain ATCC 204508 / S288c) (Baker's yeast).